A 290-amino-acid polypeptide reads, in one-letter code: 2-dehydro-3-deoxyphosphooctonate aldolase 1 (290 aa).

An N-acetylalanine modification is found at Ala2.

It belongs to the KdsA family. In terms of tissue distribution, expressed in shoots.

Its subcellular location is the cytoplasm. It catalyses the reaction D-arabinose 5-phosphate + phosphoenolpyruvate + H2O = 3-deoxy-alpha-D-manno-2-octulosonate-8-phosphate + phosphate. In terms of biological role, catalyzes the stereospecific condensation of D-arabinose 5-phosphate and phosphoenolpyruvate to form 3-deoxy-D-manno-octulosonate 8-phosphate (KDO-8-phosphate) and inorganic phosphate. Involved in the biosynthesis of 3-deoxy-D-manno-octulosonate (KDO) which is an indispensable component of rhamnogalacturonan II (RG-II), a structurally complex pectic polysaccharide of the primary cell wall. RG-II is essential for the cell wall integrity of rapidly growing tissues and pollen tube growth and elongation. This chain is 2-dehydro-3-deoxyphosphooctonate aldolase 1 (KDSA1), found in Arabidopsis thaliana (Mouse-ear cress).